Consider the following 563-residue polypeptide: Testis-expressed basic protein 1 (563 aa).

Residues 3 to 23 form a helical membrane-spanning segment; sequence VLEITLAVILTLLGLAILAIL. The tract at residues 56–81 is disordered; it reads GSRHAYSTQSDTSYDNRERSKRDYTP. The span at 69 to 79 shows a compositional bias: basic and acidic residues; it reads YDNRERSKRDY. The chain crosses the membrane as a helical span at residues 99-119; that stretch reads ELILLLMCFILALSRSSIGSI. The disordered stretch occupies residues 311 to 563; the sequence is SEMSIPQGQG…GRKYNKKVEE (253 aa). Basic and acidic residues predominate over residues 367 to 383; it reads QVEKSEMGVPRRQESQV. A compositionally biased stretch (low complexity) spans 384-395; sequence KKSQSGVSKGQE. Composition is skewed to basic and acidic residues over residues 412-447 and 485-544; these read QVEKSELKVPKGQEGQVEKTEADVPKEQEVQEKKSE and EAQE…EKSK.

Its subcellular location is the membrane. The sequence is that of Testis-expressed basic protein 1 from Homo sapiens (Human).